The following is a 184-amino-acid chain: Ras protein let-60 (184 aa).

Position 10–17 (10–17) interacts with GTP; sequence GDGGVGKS. Residues 32 to 40 carry the Effector region motif; sequence YDPTIEDSY. Residues 57–61 and 116–119 contribute to the GTP site; these read DTAGQ and NKCD. C181 bears the Cysteine methyl ester mark. A lipid anchor (S-farnesyl cysteine) is attached at C181. A propeptide spans 182-184 (removed in mature form); the sequence is QIM.

This sequence belongs to the small GTPase superfamily. Ras family. In terms of assembly, interacts with soc-2. Interacts (in GTP-bound form) with plc-1 (via Ras-associating domain 1). Expressed in body wall muscles and in the nervous system including ganglion, nerve ring dorsal and ventral nerve cords, motor neurons and sensory tail neurons.

The protein resides in the cell membrane. The enzyme catalyses GTP + H2O = GDP + phosphate + H(+). GTP-binding protein with GTPase activity. The level of let-60 controls the switch between vulval and hypodermal cell fates during C.elegans vulval induction. May stimulate the guanine nucleotide exchange factor (GEF) activity of rap-1. May induce nuclear condensation. The chain is Ras protein let-60 from Caenorhabditis elegans.